Here is a 202-residue protein sequence, read N- to C-terminus: Large ribosomal subunit protein bL17 (202 aa).

The interval 132–202 is disordered; sequence DAAQKAASAG…TEVEKADDDK (71 aa). Over residues 134 to 168 the composition is skewed to low complexity; the sequence is AQKAASAGAQEVTAAAAPQAAVEPEAVETEASAET. Acidic residues predominate over residues 169-193; the sequence is AEAEVETAEVEAVDEASAEEADEAT.

Belongs to the bacterial ribosomal protein bL17 family. As to quaternary structure, part of the 50S ribosomal subunit. Contacts protein L32.

This chain is Large ribosomal subunit protein bL17, found in Mycolicibacterium vanbaalenii (strain DSM 7251 / JCM 13017 / BCRC 16820 / KCTC 9966 / NRRL B-24157 / PYR-1) (Mycobacterium vanbaalenii).